Here is a 195-residue protein sequence, read N- to C-terminus: Holliday junction branch migration complex subunit RuvA (195 aa).

Positions 1 to 61 (MYEYFEGIIS…DTGITLYGFQ (61 aa)) are domain I. Residues 62–140 (DQDDKGLFLK…DYVARLDKPE (79 aa)) form a domain II region. A flexible linker region spans residues 141-146 (NGEEIS). The segment at 146–195 (SPALNDALLALIALGYTQKEVDRITPKLVEIEADTADQYIKKGLALLLKK) is domain III.

It belongs to the RuvA family. In terms of assembly, homotetramer. Forms an RuvA(8)-RuvB(12)-Holliday junction (HJ) complex. HJ DNA is sandwiched between 2 RuvA tetramers; dsDNA enters through RuvA and exits via RuvB. An RuvB hexamer assembles on each DNA strand where it exits the tetramer. Each RuvB hexamer is contacted by two RuvA subunits (via domain III) on 2 adjacent RuvB subunits; this complex drives branch migration. In the full resolvosome a probable DNA-RuvA(4)-RuvB(12)-RuvC(2) complex forms which resolves the HJ.

It is found in the cytoplasm. Its function is as follows. The RuvA-RuvB-RuvC complex processes Holliday junction (HJ) DNA during genetic recombination and DNA repair, while the RuvA-RuvB complex plays an important role in the rescue of blocked DNA replication forks via replication fork reversal (RFR). RuvA specifically binds to HJ cruciform DNA, conferring on it an open structure. The RuvB hexamer acts as an ATP-dependent pump, pulling dsDNA into and through the RuvAB complex. HJ branch migration allows RuvC to scan DNA until it finds its consensus sequence, where it cleaves and resolves the cruciform DNA. The protein is Holliday junction branch migration complex subunit RuvA of Lactobacillus acidophilus (strain ATCC 700396 / NCK56 / N2 / NCFM).